A 378-amino-acid polypeptide reads, in one-letter code: Mannitol-1-phosphate 5-dehydrogenase (378 aa).

Position 4–15 (4–15 (SVHFGAGNIGRG)) interacts with NAD(+).

Belongs to the mannitol dehydrogenase family.

It carries out the reaction D-mannitol 1-phosphate + NAD(+) = beta-D-fructose 6-phosphate + NADH + H(+). The chain is Mannitol-1-phosphate 5-dehydrogenase from Streptococcus pneumoniae (strain ATCC 700669 / Spain 23F-1).